We begin with the raw amino-acid sequence, 148 residues long: Snaclec jerdonuxin subunit beta (148 aa).

A signal peptide spans 1-23 (MVRFIFVSFGLLVVFLSLSGIGA). 3 cysteine pairs are disulfide-bonded: cysteine 27/cysteine 38, cysteine 55/cysteine 144, and cysteine 121/cysteine 136. Residues 34–145 (YDEHCYQVFQ…CSSKRYIVCK (112 aa)) form the C-type lectin domain.

The protein belongs to the snaclec family. Tetramer of 4 heterodimers of alpha and beta subunits; disulfide-linked. Expressed by the venom gland.

It is found in the secreted. Functionally, snaclec that strongly induces platelet aggregation, in a dose-dependent manner. The chain is Snaclec jerdonuxin subunit beta from Protobothrops jerdonii (Jerdon's pitviper).